A 144-amino-acid chain; its full sequence is Cytochrome c oxidase subunit 4 isoform 1, mitochondrial (144 aa).

Topologically, residues 1–73 (SVVKSEDFSL…SFAEMNRGSN (73 aa)) are mitochondrial matrix. Lysine 4 carries the post-translational modification N6-acetyllysine; alternate. Lysine 4 bears the N6-succinyllysine; alternate mark. Lysine 28 is modified (N6-acetyllysine). Serine 31 and serine 33 each carry phosphoserine. Position 35 is an N6-acetyllysine; alternate (lysine 35). An N6-succinyllysine; alternate modification is found at lysine 35. Lysine 42 carries the post-translational modification N6-acetyllysine. A helical transmembrane segment spans residues 74 to 99 (EWKTVVGGAMFFIGFTALVIMWQKHY). The Mitochondrial intermembrane segment spans residues 100 to 144 (VYGPLPQSFDKEWVAKQTKRMLDMKVNPIQGLASKWDYEKNEWKK).

The protein belongs to the cytochrome c oxidase IV family. Component of the cytochrome c oxidase (complex IV, CIV), a multisubunit enzyme composed of 14 subunits. The complex is composed of a catalytic core of 3 subunits MT-CO1, MT-CO2 and MT-CO3, encoded in the mitochondrial DNA, and 11 supernumerary subunits COX4I, COX5A, COX5B, COX6A, COX6B, COX6C, COX7A, COX7B, COX7C, COX8 and NDUFA4, which are encoded in the nuclear genome. The complex exists as a monomer or a dimer and forms supercomplexes (SCs) in the inner mitochondrial membrane with NADH-ubiquinone oxidoreductase (complex I, CI) and ubiquinol-cytochrome c oxidoreductase (cytochrome b-c1 complex, complex III, CIII), resulting in different assemblies (supercomplex SCI(1)III(2)IV(1) and megacomplex MCI(2)III(2)IV(2)). Interacts with PHB2; the interaction decreases in absence of SPHK2. Interacts with AFG1L. Interacts with ABCB7; this interaction allows the regulation of cellular iron homeostasis and cellular reactive oxygen species (ROS) levels in cardiomyocytes. Interacts with FLVCR2; this interaction occurs in the absence of heme and is disrupted upon heme binding. Interacts with IRGC.

The protein resides in the mitochondrion inner membrane. The protein operates within energy metabolism; oxidative phosphorylation. In terms of biological role, component of the cytochrome c oxidase, the last enzyme in the mitochondrial electron transport chain which drives oxidative phosphorylation. The respiratory chain contains 3 multisubunit complexes succinate dehydrogenase (complex II, CII), ubiquinol-cytochrome c oxidoreductase (cytochrome b-c1 complex, complex III, CIII) and cytochrome c oxidase (complex IV, CIV), that cooperate to transfer electrons derived from NADH and succinate to molecular oxygen, creating an electrochemical gradient over the inner membrane that drives transmembrane transport and the ATP synthase. Cytochrome c oxidase is the component of the respiratory chain that catalyzes the reduction of oxygen to water. Electrons originating from reduced cytochrome c in the intermembrane space (IMS) are transferred via the dinuclear copper A center (CU(A)) of subunit 2 and heme A of subunit 1 to the active site in subunit 1, a binuclear center (BNC) formed by heme A3 and copper B (CU(B)). The BNC reduces molecular oxygen to 2 water molecules using 4 electrons from cytochrome c in the IMS and 4 protons from the mitochondrial matrix. This is Cytochrome c oxidase subunit 4 isoform 1, mitochondrial (COX4I1) from Pan troglodytes (Chimpanzee).